A 533-amino-acid chain; its full sequence is Di/tripeptide-binding protein 3 (533 aa).

A signal peptide spans 1–24 (MRKILPLRAWLAAGLILGSPFSHA).

The protein belongs to the bacterial solute-binding protein 5 family. In terms of assembly, the complex is composed of two ATP-binding proteins (DppD and DppF), two transmembrane proteins (DppB and DppC) and a solute-binding protein (DppA3). Five orthologous SBPs (DppA1-A5) are present in P.aeruginosa, which increases the substrate specificity of the DppBCDF transporter.

Its function is as follows. Part of the ABC transporter DppABCDF involved in the uptake of various di/tripeptides. Prefers dipeptides with acidic residues at the C-terminal end. Involved in the uptake of phaseolotoxin, a toxic tripeptide inhibiting the enzyme ornithine carbamoyltransferase. The polypeptide is Di/tripeptide-binding protein 3 (Pseudomonas aeruginosa (strain UCBPP-PA14)).